The chain runs to 213 residues: Homeobox protein koza (213 aa).

Positions isoleucine 24–histidine 72 are disordered. Basic and acidic residues predominate over residues serine 32–serine 59. The segment at residues glutamine 102 to glutamine 161 is a DNA-binding region (homeobox).

It belongs to the NK-3 homeobox family. Expressed in the muscle layer of embryonic somites. In tailbud embryos, expressed throughout the entire myotome but at the mid-tailbud stage (stage 32), expression becomes restricted to the outer periphery of the somite so that by the tadpole stage only the outer, type I cells show expression. Also expressed in the dorsal cement gland and in the myocardial layer of the developing heart. In all tissues, expression begins after terminal differentiation.

The protein localises to the nucleus. Functionally, may regulate cell proliferation in a tissue-specific manner. The protein is Homeobox protein koza of Xenopus laevis (African clawed frog).